The primary structure comprises 474 residues: tRNA modification GTPase MnmE (474 aa).

Arg28, Glu92, and Arg131 together coordinate (6S)-5-formyl-5,6,7,8-tetrahydrofolate. In terms of domain architecture, TrmE-type G spans 227–395 (GIPVAIVGTT…LKGELTQIME (169 aa)). K(+) is bound at residue Asn237. GTP contacts are provided by residues 237–242 (NVGKST), 256–262 (SDIHGTT), 281–284 (DTAG), and 376–378 (SAR). Residue Ser241 participates in Mg(2+) binding. 3 residues coordinate K(+): Ser256, Ile258, and Thr261. Thr262 lines the Mg(2+) pocket. Lys474 serves as a coordination point for (6S)-5-formyl-5,6,7,8-tetrahydrofolate.

It belongs to the TRAFAC class TrmE-Era-EngA-EngB-Septin-like GTPase superfamily. TrmE GTPase family. Homodimer. Heterotetramer of two MnmE and two MnmG subunits. The cofactor is K(+).

The protein localises to the cytoplasm. Exhibits a very high intrinsic GTPase hydrolysis rate. Involved in the addition of a carboxymethylaminomethyl (cmnm) group at the wobble position (U34) of certain tRNAs, forming tRNA-cmnm(5)s(2)U34. The protein is tRNA modification GTPase MnmE of Porphyromonas gingivalis (strain ATCC BAA-308 / W83).